Reading from the N-terminus, the 744-residue chain is Tripartite motif-containing protein 2 (744 aa).

The residue at position 10 (S10) is a Phosphoserine. The RING-type zinc finger occupies 23 to 64 (CSICLERYKNPKVLPCLHTFCERCLQNYIPAHSLTLSCPVCR). The B box-type zinc finger occupies 113–154 (GKPLSCPNHDGNVMDFYCQSCETAMCRECTEGEHAEHPTVPL). Zn(2+)-binding residues include C118, H121, C141, and H146. The stretch at 320–421 (TTNAVASETV…IRGSPFKLKV (102 aa)) is one Filamin repeat. The residue at position 371 (T371) is a Phosphothreonine. Phosphoserine is present on residues S375, S424, and S428. Residues 432-462 (EGVKRRVKSPGSGHVKQKAVKRPASMYSTGK) are disordered. 6 NHL repeats span residues 473–516 (IFRV…FSND), 520–563 (KSRF…FSSD), 564–605 (GKFK…FQPN), 609–652 (VTRF…FNQE), 656–699 (MLKF…FDGS), and 700–743 (GSFL…YRYL).

It belongs to the TRIM/RBCC family. Forms homooligomers. Interacts with TRIM3; this interaction reduces TRIM2 activity. Interacts with myosin V; myosin V may not be a substrate for ubiquitination. Interacts with NEFL. Interacts with phosphorylated BCL2L11. Interacts with SIRPA. RING-type zinc finger-dependent and UBE2D1-dependent autoubiquitination.

The protein localises to the cytoplasm. It catalyses the reaction S-ubiquitinyl-[E2 ubiquitin-conjugating enzyme]-L-cysteine + [acceptor protein]-L-lysine = [E2 ubiquitin-conjugating enzyme]-L-cysteine + N(6)-ubiquitinyl-[acceptor protein]-L-lysine.. Its pathway is protein modification; protein ubiquitination. In terms of biological role, UBE2D1-dependent E3 ubiquitin-protein ligase that mediates the ubiquitination of NEFL and of phosphorylated BCL2L11. Plays a neuroprotective function. May play a role in neuronal rapid ischemic tolerance. Plays a role in antiviral immunity and limits New World arenavirus infection independently of its ubiquitin ligase activity. In Ailuropoda melanoleuca (Giant panda), this protein is Tripartite motif-containing protein 2 (TRIM2).